Consider the following 327-residue polypeptide: rRNA 2'-O-methyltransferase fibrillarin (327 aa).

Residues 1-93 (MKPGFSPRGG…RGNQSGKNVM (93 aa)) form a disordered region. Over residues 7-80 (PRGGGFGGRG…GGGRGRGGGR (74 aa)) the composition is skewed to gly residues. 6 positions are modified to asymmetric dimethylarginine: arginine 8, arginine 15, arginine 21, arginine 24, arginine 28, and arginine 31. Glycyl lysine isopeptide (Lys-Gly) (interchain with G-Cter in SUMO2) cross-links involve residues lysine 90, lysine 108, and lysine 115. At lysine 108 the chain carries N6-acetyllysine. Phosphoserine is present on serine 122. Lysine 127 bears the N6-acetyllysine mark. A phosphoserine mark is found at serine 130 and serine 132. Glycyl lysine isopeptide (Lys-Gly) (interchain with G-Cter in SUMO2) cross-links involve residues lysine 137, lysine 149, and lysine 164. S-adenosyl-L-methionine-binding positions include 178–179 (TT) and 197–198 (EF). An N6-acetyllysine mark is found at lysine 211 and lysine 212. Residues 222-223 (DA) and 242-245 (DVAQ) each bind S-adenosyl-L-methionine.

It belongs to the methyltransferase superfamily. Fibrillarin family. Component of box C/D small nucleolar ribonucleoprotein (snoRNP) particles that contain SNU13, FBL, NOP5 and NOP56, plus a guide RNA. It is associated with the U3, U8, U13, X and Y small nuclear RNAs. Component of several ribosomal and nucleolar protein complexes. Part of the small subunit (SSU) processome, composed of more than 70 proteins and the RNA chaperone small nucleolar RNA (snoRNA) U3. Interacts with PRMT5 and UTP20. Interacts with DDX5 and C1QBP. Interacts with NOL11. Interacts with PIH1D1. Interacts with RRP1B. Interacts with NOLC1. Interacts with SDE2. Interacts with NOP2 and NOP56. Post-translationally, ubiquitinated. Ubiquitination leads to proteasomal degradation. Deubiquitinated by USP36. By homology to other fibrillarins, some or all of the N-terminal domain arginines are modified to asymmetric dimethylarginine (DMA). In terms of processing, acetylated by CREBBP/CBP, preventing methylation of 'Gln-105' of histone H2A (H2AQ104me), without affecting rRNA methylation. Deacetylation by SIRT7 restores methylation of 'Gln-105' of histone H2A (H2AQ104me).

It is found in the nucleus. It localises to the nucleolus. Its subcellular location is the nucleoplasm. The enzyme catalyses L-glutaminyl-[histone H2A] + S-adenosyl-L-methionine = N(5)-methyl-L-glutaminyl-[histone H2A] + S-adenosyl-L-homocysteine + H(+). It catalyses the reaction a ribonucleotide in rRNA + S-adenosyl-L-methionine = a 2'-O-methylribonucleotide in rRNA + S-adenosyl-L-homocysteine + H(+). The catalysed reaction is a ribonucleotide in U6 snRNA + S-adenosyl-L-methionine = a 2'-O-methylribonucleotide in U6 snRNA + S-adenosyl-L-homocysteine + H(+). In terms of biological role, S-adenosyl-L-methionine-dependent methyltransferase that has the ability to methylate both RNAs and proteins. Involved in pre-rRNA processing by catalyzing the site-specific 2'-hydroxyl methylation of ribose moieties in pre-ribosomal RNA. Site specificity is provided by a guide RNA that base pairs with the substrate. Methylation occurs at a characteristic distance from the sequence involved in base pairing with the guide RNA. Probably catalyzes 2'-O-methylation of U6 snRNAs in box C/D RNP complexes. U6 snRNA 2'-O-methylation is required for mRNA splicing fidelity. Also acts as a protein methyltransferase by mediating methylation of 'Gln-105' of histone H2A (H2AQ104me), a modification that impairs binding of the FACT complex and is specifically present at 35S ribosomal DNA locus. Part of the small subunit (SSU) processome, first precursor of the small eukaryotic ribosomal subunit. During the assembly of the SSU processome in the nucleolus, many ribosome biogenesis factors, an RNA chaperone and ribosomal proteins associate with the nascent pre-rRNA and work in concert to generate RNA folding, modifications, rearrangements and cleavage as well as targeted degradation of pre-ribosomal RNA by the RNA exosome. This chain is rRNA 2'-O-methyltransferase fibrillarin (Fbl), found in Rattus norvegicus (Rat).